We begin with the raw amino-acid sequence, 605 residues long: F-box/WD repeat-containing protein pof1 (605 aa).

One can recognise an F-box domain in the interval 107 to 153; sequence LDFLSLLPVEISFRILSFLDARSLCQAAQVSKHWKELADDDVIWHRM. A compositionally biased stretch (basic and acidic residues) spans 195–212; that stretch reads GVDQAHESSPVKKAKLDD. The interval 195–231 is disordered; sequence GVDQAHESSPVKKAKLDDYPTSSNEETISSVKPPSPN. The segment covering 214–231 has biased composition (polar residues); sequence PTSSNEETISSVKPPSPN. A phosphoserine mark is found at serine 229 and serine 232. WD repeat units follow at residues 271–299, 311–339, 350–379, 390–420, 432–460, 472–500, and 510–538; these read GHSDGVMCLQLVRNILASGSYDATIRLWN, GHSSGVTCLQFDQCKLISGSMDKTIRIWN, HGHTDSVLCLTFDSTLLVSGSADCTVKLWH, GHTGPVNSVRIIRDRGLVLSGSDDSTIKIWS, AHIGPVQSLALADSRLFSCSLDGTIKQWD, GHIEGVWEIAADHLRLISGAHDGVVKVWE, and NHSEPVTSVALGDCEVVSGSEDGKIYLWL.

As to quaternary structure, a part of the E3 ubiquitin ligase Skp1-Cullin-1-F-box (SCF) complex. Interacts with cul1, skp1 and phosphorylated zip1.

The protein localises to the nucleus. Its function is as follows. Probably recognizes and binds to some phosphorylated proteins and promotes their ubiquitination and degradation. Required for the inactivation of zip1 via ubiquitination. In Schizosaccharomyces pombe (strain 972 / ATCC 24843) (Fission yeast), this protein is F-box/WD repeat-containing protein pof1 (pof1).